The chain runs to 94 residues: Aspartyl/glutamyl-tRNA(Asn/Gln) amidotransferase subunit C (94 aa).

The protein belongs to the GatC family. Heterotrimer of A, B and C subunits.

The catalysed reaction is L-glutamyl-tRNA(Gln) + L-glutamine + ATP + H2O = L-glutaminyl-tRNA(Gln) + L-glutamate + ADP + phosphate + H(+). It carries out the reaction L-aspartyl-tRNA(Asn) + L-glutamine + ATP + H2O = L-asparaginyl-tRNA(Asn) + L-glutamate + ADP + phosphate + 2 H(+). Functionally, allows the formation of correctly charged Asn-tRNA(Asn) or Gln-tRNA(Gln) through the transamidation of misacylated Asp-tRNA(Asn) or Glu-tRNA(Gln) in organisms which lack either or both of asparaginyl-tRNA or glutaminyl-tRNA synthetases. The reaction takes place in the presence of glutamine and ATP through an activated phospho-Asp-tRNA(Asn) or phospho-Glu-tRNA(Gln). This chain is Aspartyl/glutamyl-tRNA(Asn/Gln) amidotransferase subunit C, found in Opitutus terrae (strain DSM 11246 / JCM 15787 / PB90-1).